A 446-amino-acid chain; its full sequence is MHRIFLITVALALLTASPASAITPPPIDPGALPPDVTGPDQPTEQRVLCASPTTLPGSGFHDPPWSNTYLGVADAHKFATGAGVTVAVIDTGVDASPRVPAEPGGDFVDQAGNGLSDCDAHGTLTASIIAGRPAPTDGFVGVAPDARLLSLRQTSEAFEPVGSQANPNDPNATPAAGSIRSLARAVVHAANLGVGVINISEAACYKVSRPIDETSLGASIDYAVNVKGVVVVVAAGNTGGDCVQNPAPDPSTPGDPRGWNNVQTVVTPAWYAPLVLSVGGIGQTGMPSSFSMHGPWVDVAAPAENIVALGDTGEPVNALQGREGPVPIAGTSFAAAYVSGLAALLRQRFPDLTPAQIIHRITATARHPGGGVDDLVGAGVIDAVAALTWDIPPGPASAPYNVRRLPPPVVEPGPDRRPITAVALVAVGLTLALGLGALARRALSRR.

An N-terminal signal peptide occupies residues 1–21 (MHRIFLITVALALLTASPASA). The segment at 24 to 43 (PPPIDPGALPPDVTGPDQPT) is disordered. In terms of domain architecture, Peptidase S8 spans 64 to 387 (PWSNTYLGVA…AGVIDAVAAL (324 aa)). Residues Asp90, His121, and Ser332 each act as charge relay system in the active site. Residues 419 to 439 (ITAVALVAVGLTLALGLGALA) traverse the membrane as a helical segment.

This sequence belongs to the peptidase S8 family.

The protein localises to the cell membrane. Its function is as follows. May play a dual role in regulation of ESX-1 secretion and virulence. Acts as a protease that cleaves EspB. Essential for ESX-1 function, required for early replication in macrophages and full virulence in mice. The protein is Mycosin-1 of Mycobacterium tuberculosis (strain ATCC 25618 / H37Rv).